Consider the following 309-residue polypeptide: Dihydroorotate dehydrogenase B (NAD(+)), catalytic subunit (309 aa).

FMN contacts are provided by residues Ser-21 and 45 to 46 (KA). Substrate-binding positions include Lys-45 and 69–73 (NAIGL). 2 residues coordinate FMN: Asn-99 and Asn-127. Substrate is bound at residue Asn-127. Catalysis depends on Cys-130, which acts as the Nucleophile. FMN is bound by residues Lys-165 and Ile-191. Position 192-193 (192-193 (NT)) interacts with substrate. FMN contacts are provided by residues Gly-217, 243–244 (GG), and 265–266 (GT).

This sequence belongs to the dihydroorotate dehydrogenase family. Type 1 subfamily. Heterotetramer of 2 PyrK and 2 PyrD type B subunits. The cofactor is FMN.

The protein resides in the cytoplasm. It catalyses the reaction (S)-dihydroorotate + NAD(+) = orotate + NADH + H(+). Its pathway is pyrimidine metabolism; UMP biosynthesis via de novo pathway; orotate from (S)-dihydroorotate (NAD(+) route): step 1/1. Functionally, catalyzes the conversion of dihydroorotate to orotate with NAD(+) as electron acceptor. This Bacillus cereus (strain B4264) protein is Dihydroorotate dehydrogenase B (NAD(+)), catalytic subunit (pyrD).